A 913-amino-acid polypeptide reads, in one-letter code: Chitin synthase 1 (913 aa).

Positions 1–27 (MSGAPPPSSGFAPRSYGQQPLSHAPRS) are disordered. Residues T237, E241, and D291 each coordinate UDP-N-acetyl-alpha-D-glucosamine. N-linked (GlcNAc...) asparagine glycosylation occurs at N420. The active site involves D496. N-linked (GlcNAc...) asparagine glycosylation occurs at N510. Transmembrane regions (helical) follow at residues 539–559 (WLNG…RIYS), 581–601 (YTAF…FIVF), 625–645 (AVYI…IIGL), 658–678 (FVGA…AGIF), 684–704 (TVHS…ASAL), and 711–731 (IFMT…IFTI). Positions 741 to 743 (SWG) match the Conserved SWG motif motif. Transmembrane regions (helical) follow at residues 800–820 (VLLT…YFAS) and 825–845 (MPVL…GSIG). N-linked (GlcNAc...) asparagine glycosylation is found at N867 and N900.

Belongs to the chitin synthase family. Class II subfamily. As to quaternary structure, homodimer. Requires Mn(2+) as cofactor.

It localises to the cell membrane. The catalysed reaction is [(1-&gt;4)-N-acetyl-beta-D-glucosaminyl](n) + UDP-N-acetyl-alpha-D-glucosamine = [(1-&gt;4)-N-acetyl-beta-D-glucosaminyl](n+1) + UDP + H(+). The activity is inhibited by nikkomycin Z (NikZ). Polymerizes chitin, a structural polymer of the cell wall and septum, by transferring the sugar moiety of UDP-GlcNAc to the non-reducing end of the growing chitin polymer. Involved in mycelial growth, sporangial production, zoospore release and pathogenesis. The protein is Chitin synthase 1 of Phytophthora sojae (strain P6497) (Soybean stem and root rot agent).